A 108-amino-acid chain; its full sequence is MAIDVLDVISLSLFKQQIEFEEDDRDELITLYAQAAFDYCMRWCDEPAWKVAADIPAAVKGAVLLVFADMFEHRTAQSEVQLYENAAAERMMFIHRNWRGKAESEEGS.

Belongs to the Caudoviricetes gp6/gp15 head completion protein family. As to quaternary structure, homotridecamer. Interacts with the stopper protein gp7. Interacts with the portal protein; this interaction occurs at the end of the packaging when the terminase complex is replaced by the connector.

The protein localises to the virion. Head completion protein that exhibits an open central channel for viral DNA ejection. Part of the head-tail connector by binding to the portal protein and to the head completion protein gp7. The polypeptide is Head completion protein gp6 (6) (Escherichia coli (Bacteriophage HK97)).